An 83-amino-acid chain; its full sequence is Probable calcium-binding protein CML29 (83 aa).

2 EF-hand domains span residues 5–40 and 43–75; these read TEKA…LGSV and DDVK…NRGL. Ca(2+) is bound by residues aspartate 18, asparagine 20, aspartate 22, lysine 24, glutamate 29, aspartate 53, aspartate 55, aspartate 57, asparagine 59, and glutamate 64.

Its function is as follows. Potential calcium sensor. In Arabidopsis thaliana (Mouse-ear cress), this protein is Probable calcium-binding protein CML29 (CML29).